A 344-amino-acid polypeptide reads, in one-letter code: Protein BIM1 (344 aa).

S2 carries the post-translational modification N-acetylserine. Residues 6-107 (GESRTELLTW…FLQWLKKHWI (102 aa)) form the Calponin-homology (CH) domain. Residues 126 to 173 (IITNNSATKPRTVSNPTTAKRSSSTGTGSAMSGGLATRHSSLGINGSR) are disordered. The segment covering 127–146 (ITNNSATKPRTVSNPTTAKR) has biased composition (polar residues). Over residues 147–159 (SSSTGTGSAMSGG) the composition is skewed to low complexity. S157 carries the phosphoserine modification. The span at 163 to 173 (RHSSLGINGSR) shows a compositional bias: polar residues. Residues 188 to 281 (ELTKSQETIG…LYATAEGFEM (94 aa)) enclose the EB1 C-terminal domain. A disordered region spans residues 292–312 (NLGEHGTVPNQGGYANSNGEV).

The protein belongs to the MAPRE family.

It localises to the cytoplasm. Its subcellular location is the cytoskeleton. Binds microtubules. The polypeptide is Protein BIM1 (BIM1) (Saccharomyces cerevisiae (strain ATCC 204508 / S288c) (Baker's yeast)).